A 398-amino-acid polypeptide reads, in one-letter code: Tyrosine--tRNA ligase (398 aa).

The short motif at 42–51 (PTAPDLHLGH) is the 'HIGH' region element. The short motif at 226-230 (KMSKS) is the 'KMSKS' region element. Lys-229 is a binding site for ATP. The region spanning 341-397 (AFLEAAGLVKSRGEAKRLIKEGALSVDGVRCDDANSPLASGEYVIKLGKKRFLRLTV) is the S4 RNA-binding domain.

The protein belongs to the class-I aminoacyl-tRNA synthetase family. TyrS type 2 subfamily. Homodimer.

It is found in the cytoplasm. The catalysed reaction is tRNA(Tyr) + L-tyrosine + ATP = L-tyrosyl-tRNA(Tyr) + AMP + diphosphate + H(+). Catalyzes the attachment of tyrosine to tRNA(Tyr) in a two-step reaction: tyrosine is first activated by ATP to form Tyr-AMP and then transferred to the acceptor end of tRNA(Tyr). The chain is Tyrosine--tRNA ligase from Nitratidesulfovibrio vulgaris (strain ATCC 29579 / DSM 644 / CCUG 34227 / NCIMB 8303 / VKM B-1760 / Hildenborough) (Desulfovibrio vulgaris).